The following is a 290-amino-acid chain: GTPase Era (290 aa).

The Era-type G domain maps to 2–167 (KSGFVSIVGR…LDELVKYLPE (166 aa)). Residues 10 to 17 (GRTNAGKS) form a G1 region. GTP is bound at residue 10 to 17 (GRTNAGKS). The interval 36–40 (NATRR) is G2. The tract at residues 57-60 (DTPG) is G3. Residues 57 to 61 (DTPGL) and 116 to 119 (NKVD) contribute to the GTP site. Residues 116–119 (NKVD) are G4. The segment at 146–148 (YSI) is G5. The 81-residue stretch at 194–274 (IYENLSDEIP…MLKLFVQLEK (81 aa)) folds into the KH type-2 domain.

This sequence belongs to the TRAFAC class TrmE-Era-EngA-EngB-Septin-like GTPase superfamily. Era GTPase family. As to quaternary structure, monomer.

It localises to the cytoplasm. It is found in the cell inner membrane. Functionally, an essential GTPase that binds both GDP and GTP, with rapid nucleotide exchange. Plays a role in 16S rRNA processing and 30S ribosomal subunit biogenesis and possibly also in cell cycle regulation and energy metabolism. The chain is GTPase Era from Campylobacter lari (strain RM2100 / D67 / ATCC BAA-1060).